Reading from the N-terminus, the 525-residue chain is GMP synthase [glutamine-hydrolyzing] (525 aa).

The Glutamine amidotransferase type-1 domain occupies 8-207 (KILILDFGSQ…ALDICQCDAN (200 aa)). Cys85 functions as the Nucleophile in the catalytic mechanism. Active-site residues include His181 and Glu183. Residues 208–400 (WKPASIIEDA…LGLPYDMLYR (193 aa)) enclose the GMPS ATP-PPase domain. Residue 235–241 (SGGVDSS) participates in ATP binding.

In terms of assembly, homodimer.

The catalysed reaction is XMP + L-glutamine + ATP + H2O = GMP + L-glutamate + AMP + diphosphate + 2 H(+). It participates in purine metabolism; GMP biosynthesis; GMP from XMP (L-Gln route): step 1/1. Its function is as follows. Catalyzes the synthesis of GMP from XMP. The chain is GMP synthase [glutamine-hydrolyzing] from Shewanella woodyi (strain ATCC 51908 / MS32).